A 137-amino-acid polypeptide reads, in one-letter code: MSLTVRVIAPDRTVWDAPAQEVILPSTTGQLGILPGHAPLLSALDTGVLRVRADKEWLAIAVLGGFAEVENNEVTVLVNAAERGDKIDLEEARAAFSQADERLKGVKEDDRQGKFQATQAYRRARARLQAAGGLVSV.

The protein belongs to the ATPase epsilon chain family. In terms of assembly, F-type ATPases have 2 components, CF(1) - the catalytic core - and CF(0) - the membrane proton channel. CF(1) has five subunits: alpha(3), beta(3), gamma(1), delta(1), epsilon(1). CF(0) has three main subunits: a, b and c.

The protein localises to the cellular thylakoid membrane. Its function is as follows. Produces ATP from ADP in the presence of a proton gradient across the membrane. This Synechococcus elongatus (strain ATCC 33912 / PCC 7942 / FACHB-805) (Anacystis nidulans R2) protein is ATP synthase epsilon chain (atpC).